The chain runs to 61 residues: Large ribosomal subunit protein bL32 (61 aa).

The span at 1 to 19 (MAHPKRRQSKTRTAKRRTH) shows a compositional bias: basic residues. Positions 1 to 20 (MAHPKRRQSKTRTAKRRTHD) are disordered.

The protein belongs to the bacterial ribosomal protein bL32 family.

The polypeptide is Large ribosomal subunit protein bL32 (Porphyromonas gingivalis (strain ATCC 33277 / DSM 20709 / CIP 103683 / JCM 12257 / NCTC 11834 / 2561)).